Here is a 1572-residue protein sequence, read N- to C-terminus: Multiple epidermal growth factor-like domains protein 6 (1572 aa).

A signal peptide spans 1–26; the sequence is MPVGVEARASWRVVALTLLLLPAVPA. The EMI domain maps to 40-121; the sequence is MPHVCAEQKL…QKPGQEGCLS (82 aa). Disulfide bonds link Cys44/Cys107, Cys73/Cys79, Cys106/Cys119, Cys126/Cys137, Cys133/Cys146, Cys148/Cys161, Cys167/Cys178, Cys174/Cys187, Cys189/Cys202, Cys291/Cys302, Cys298/Cys311, Cys313/Cys326, Cys418/Cys429, Cys425/Cys438, Cys440/Cys453, Cys522/Cys535, Cys529/Cys542, Cys544/Cys553, Cys566/Cys578, Cys572/Cys585, Cys587/Cys596, Cys609/Cys621, Cys615/Cys628, Cys630/Cys639, Cys788/Cys797, Cys791/Cys804, Cys806/Cys815, Cys832/Cys840, Cys834/Cys847, Cys849/Cys858, Cys871/Cys884, Cys875/Cys891, Cys893/Cys902, Cys915/Cys927, Cys921/Cys934, and Cys936/Cys945. In terms of domain architecture, EGF-like 1; calcium-binding spans 122 to 162; it reads DVDECANANGGCEGPCCNTVGGFYCRCPPGYQLQGDGKTCQ. One can recognise an EGF-like 2; calcium-binding domain in the interval 163–203; it reads DVDECRSHNGGCQHRCVNTPGSYLCECKPGFRLHTDGRTCL. The region spanning 287 to 327 is the EGF-like 3; calcium-binding domain; the sequence is DVDECALGLAQCAHGCLNTQGSFKCVCHAGYELGADGRQCY. The 41-residue stretch at 414-454 folds into the EGF-like 4; calcium-binding domain; sequence DVDECASGHSGCEHHCSNLAGSFQCFCEAGYRLDEDRRGCT. 17 consecutive EGF-like domains span residues 518 to 554, 562 to 597, 605 to 640, 785 to 816, 829 to 859, 867 to 903, 911 to 946, 997 to 1032, 1040 to 1075, 1083 to 1118, 1131 to 1161, 1169 to 1204, 1256 to 1291, 1299 to 1334, 1342 to 1377, 1390 to 1420, and 1428 to 1463; these read FGHD…IICN, FGKN…AHCE, YGKH…RFCH, QEIC…SRCQ, QMRC…LSCQ, WGPD…PQCE, FGPG…SFCE, FGLN…PTCL, YGKN…LACE, HGAG…DKCQ, EEHC…SHCE, FGEA…PGCE, YGPG…ADCS, FGPS…GHCE, FGKG…PHCE, LLEC…QACE, and HGSG…QFCE. Residue Asn1000 is glycosylated (N-linked (GlcNAc...) asparagine). Intrachain disulfides connect Cys1001/Cys1013, Cys1007/Cys1020, Cys1022/Cys1031, Cys1044/Cys1056, Cys1050/Cys1063, Cys1065/Cys1074, Cys1087/Cys1099, Cys1093/Cys1106, Cys1108/Cys1117, Cys1134/Cys1142, Cys1136/Cys1149, Cys1151/Cys1160, Cys1173/Cys1185, Cys1177/Cys1192, Cys1194/Cys1203, Cys1260/Cys1272, Cys1266/Cys1279, Cys1281/Cys1290, Cys1303/Cys1315, Cys1309/Cys1322, Cys1324/Cys1333, Cys1346/Cys1358, Cys1352/Cys1365, Cys1367/Cys1376, Cys1393/Cys1401, Cys1395/Cys1408, Cys1410/Cys1419, Cys1432/Cys1444, Cys1438/Cys1451, and Cys1453/Cys1462.

Its subcellular location is the secreted. This chain is Multiple epidermal growth factor-like domains protein 6 (Megf6), found in Mus musculus (Mouse).